Consider the following 184-residue polypeptide: Photosystem I assembly protein Ycf4 (184 aa).

The next 2 membrane-spanning stretches (helical) occupy residues 22-42 (FCWA…GTSS) and 57-77 (IIFF…LFIS).

Belongs to the Ycf4 family.

The protein resides in the plastid. The protein localises to the chloroplast thylakoid membrane. Seems to be required for the assembly of the photosystem I complex. The sequence is that of Photosystem I assembly protein Ycf4 from Platanus occidentalis (Sycamore).